Reading from the N-terminus, the 256-residue chain is Small ribosomal subunit protein eS1 (256 aa).

At alanine 2 the chain carries N-acetylalanine; partial.

It belongs to the eukaryotic ribosomal protein eS1 family. Component of the small ribosomal subunit. Mature ribosomes consist of a small (40S) and a large (60S) subunit. The 40S subunit contains about 33 different proteins and 1 molecule of RNA (18S). The 60S subunit contains about 49 different proteins and 3 molecules of RNA (25S, 5.8S and 5S).

Its subcellular location is the cytoplasm. The chain is Small ribosomal subunit protein eS1 from Postia placenta (strain ATCC 44394 / Madison 698-R) (Brown rot fungus).